A 31-amino-acid chain; its full sequence is Fibrinogen beta chain (31 aa).

The span at 1-10 shows a compositional bias: acidic residues; the sequence is HYYDDTDEEE. Residues 1 to 31 are disordered; it reads HYYDDTDEEERIVSTVDARGHRPLDKKREEA. Tyr-2 bears the Sulfotyrosine; partial mark. The residue at position 3 (Tyr-3) is a Sulfotyrosine. Positions 18 to 31 are enriched in basic and acidic residues; that stretch reads ARGHRPLDKKREEA.

In terms of assembly, heterohexamer; disulfide linked. Contains 2 sets of 3 non-identical chains (alpha, beta and gamma). The 2 heterotrimers are in head to head conformation with the N-termini in a small central domain. Conversion of fibrinogen to fibrin is triggered by thrombin, which cleaves fibrinopeptides A and B from alpha and beta chains, and thus exposes the N-terminal polymerization sites responsible for the formation of the soft clot.

The protein localises to the secreted. Cleaved by the protease thrombin to yield monomers which, together with fibrinogen alpha (FGA) and fibrinogen gamma (FGG), polymerize to form an insoluble fibrin matrix. Fibrin has a major function in hemostasis as one of the primary components of blood clots. In addition, functions during the early stages of wound repair to stabilize the lesion and guide cell migration during re-epithelialization. Was originally thought to be essential for platelet aggregation, based on in vitro studies using anticoagulated blood. However subsequent studies have shown that it is not absolutely required for thrombus formation in vivo. Enhances expression of SELP in activated platelets. Maternal fibrinogen is essential for successful pregnancy. Fibrin deposition is also associated with infection, where it protects against IFNG-mediated hemorrhage. May also facilitate the antibacterial immune response via both innate and T-cell mediated pathways. In Canis lupus familiaris (Dog), this protein is Fibrinogen beta chain (FGB).